Reading from the N-terminus, the 1275-residue chain is Myosin-1 (1275 aa).

One can recognise a Myosin motor domain in the interval 35 to 727 (VGVSDLTLLS…TLFAMEDMRD (693 aa)). 128 to 135 (GESGAGKT) provides a ligand contact to ATP. Position 361 is a phosphoserine (Ser-361). The interval 410–493 (TIGILDIYGF…PGLFAALNDS (84 aa)) is actin-binding. IQ domains are found at residues 731–751 (HNMA…KEDA) and 752–777 (ARLI…YGNG). The TH1 domain occupies 785–974 (RRRMSMLGSR…KSGTVSVRPG (190 aa)). Disordered stretches follow at residues 966–1064 (SGTV…LNNN), 1089–1128 (QNHN…AKPK), 1183–1230 (SECP…GGLS), and 1251–1275 (IADA…DDDW). The segment covering 977 to 992 (PDSQNPKRPRATSSKV) has biased composition (polar residues). The segment covering 1095 to 1106 (PTAPSRPAKKAA) has biased composition (low complexity). The span at 1107–1121 (PAPPVKKTAPPPPPS) shows a compositional bias: pro residues. One can recognise an SH3 domain in the interval 1127-1187 (PKWPTFKANY…PTAYISECPP (61 aa)). Residues 1254 to 1263 (ALKKRSATRD) show a composition bias toward basic and acidic residues. Residues 1264-1275 (SDDEEEDDDDDW) show a composition bias toward acidic residues.

It belongs to the TRAFAC class myosin-kinesin ATPase superfamily. Myosin family. Post-translationally, phosphorylation of the TEDS site (Ser-361) is required for the polarization of the actin cytoskeleton. Phosphorylation probably activates the myosin-I ATPase activity.

It localises to the cytoplasm. It is found in the cytoskeleton. The protein localises to the actin patch. In terms of biological role, type-I myosin implicated in the organization of the actin cytoskeleton. Required for proper actin cytoskeleton polarization. At the cell cortex, assembles in patch-like structures together with proteins from the actin-polymerizing machinery and promotes actin assembly. Functions as actin nucleation-promoting factor (NPF) for the Arp2/3 complex. The protein is Myosin-1 (MYO1) of Meyerozyma guilliermondii (strain ATCC 6260 / CBS 566 / DSM 6381 / JCM 1539 / NBRC 10279 / NRRL Y-324) (Yeast).